The chain runs to 1465 residues: DNA polymerase III PolC-type (1465 aa).

Residues 427-583 (YVVFDVETTG…YDAEATGRLL (157 aa)) form the Exonuclease domain.

It belongs to the DNA polymerase type-C family. PolC subfamily.

It localises to the cytoplasm. The enzyme catalyses DNA(n) + a 2'-deoxyribonucleoside 5'-triphosphate = DNA(n+1) + diphosphate. Its function is as follows. Required for replicative DNA synthesis. This DNA polymerase also exhibits 3' to 5' exonuclease activity. This chain is DNA polymerase III PolC-type, found in Streptococcus pyogenes serotype M12 (strain MGAS2096).